The primary structure comprises 220 residues: Putative cobalt transport protein CbiM (220 aa).

5 consecutive transmembrane segments (helical) span residues 6–26 (GFLP…IVVY), 43–63 (ALVA…FPSV), 74–94 (GLLV…IVLL), 98–118 (LLLA…MGII), and 182–202 (IFTL…AAVI).

Belongs to the CbiM family. As to quaternary structure, forms an energy-coupling factor (ECF) transporter complex composed of an ATP-binding protein (A component, CbiO), a transmembrane protein (T component, CbiQ) and 2 possible substrate-capture proteins (S components, CbiM and CbiN) of unknown stoichimetry.

Its subcellular location is the cell membrane. It participates in cofactor biosynthesis; adenosylcobalamin biosynthesis. Its function is as follows. Part of the energy-coupling factor (ECF) transporter complex CbiMNOQ involved in cobalt import. This is Putative cobalt transport protein CbiM from Haloquadratum walsbyi (strain DSM 16790 / HBSQ001).